The primary structure comprises 132 residues: Small ribosomal subunit protein uS11 (132 aa).

Belongs to the universal ribosomal protein uS11 family. In terms of assembly, part of the 30S ribosomal subunit. Interacts with proteins S7 and S18. Binds to IF-3.

Functionally, located on the platform of the 30S subunit, it bridges several disparate RNA helices of the 16S rRNA. Forms part of the Shine-Dalgarno cleft in the 70S ribosome. In Chlamydia abortus (strain DSM 27085 / S26/3) (Chlamydophila abortus), this protein is Small ribosomal subunit protein uS11.